The sequence spans 618 residues: 1-deoxy-D-xylulose-5-phosphate synthase (618 aa).

Thiamine diphosphate-binding positions include H76 and 117–119; that span reads GHS. D148 lines the Mg(2+) pocket. Thiamine diphosphate is bound by residues 149–150, N177, Y284, and E366; that span reads GA. Residue N177 coordinates Mg(2+).

Belongs to the transketolase family. DXPS subfamily. Homodimer. Requires Mg(2+) as cofactor. The cofactor is thiamine diphosphate.

The catalysed reaction is D-glyceraldehyde 3-phosphate + pyruvate + H(+) = 1-deoxy-D-xylulose 5-phosphate + CO2. Its pathway is metabolic intermediate biosynthesis; 1-deoxy-D-xylulose 5-phosphate biosynthesis; 1-deoxy-D-xylulose 5-phosphate from D-glyceraldehyde 3-phosphate and pyruvate: step 1/1. In terms of biological role, catalyzes the acyloin condensation reaction between C atoms 2 and 3 of pyruvate and glyceraldehyde 3-phosphate to yield 1-deoxy-D-xylulose-5-phosphate (DXP). The polypeptide is 1-deoxy-D-xylulose-5-phosphate synthase (Dechloromonas aromatica (strain RCB)).